The chain runs to 281 residues: MKSKTHLGHTARKRFGQNFLHDNNIIQNIVMAIYPQKEQFLVEIGPGLGALTEPVAEKVERLTVIELDRDLAERLRHHPFLHQKLNVIEYDAMQFNFEQLYIDENLAEKNQKLRVFGNLPYNISTPLMFHLFKYHAIIQDMHFMLQKEVVKRLCAAPNSKAYGRLTIMAQYFCQVLPVLEVPPTAFKPAPKVESAVVRLIPHKELPYPVKDLYWLNRVTTQAFNQRRKTLRNALSTLFSAEKLTALAIDLEARAENLSIADYARLANYLADNPPTEDLQSE.

S-adenosyl-L-methionine-binding residues include asparagine 18, leucine 20, glycine 45, glutamate 66, aspartate 91, and asparagine 118.

Belongs to the class I-like SAM-binding methyltransferase superfamily. rRNA adenine N(6)-methyltransferase family. RsmA subfamily.

The protein localises to the cytoplasm. The catalysed reaction is adenosine(1518)/adenosine(1519) in 16S rRNA + 4 S-adenosyl-L-methionine = N(6)-dimethyladenosine(1518)/N(6)-dimethyladenosine(1519) in 16S rRNA + 4 S-adenosyl-L-homocysteine + 4 H(+). Specifically dimethylates two adjacent adenosines (A1518 and A1519) in the loop of a conserved hairpin near the 3'-end of 16S rRNA in the 30S particle. May play a critical role in biogenesis of 30S subunits. In Histophilus somni (strain 129Pt) (Haemophilus somnus), this protein is Ribosomal RNA small subunit methyltransferase A.